Here is a 78-residue protein sequence, read N- to C-terminus: MDSKNVELYTPRKCSATNRLITAKDHASVQINIGHVNAEGIYNGEQTIFAFCGFLRNNGQSDAALNRLAQQKGFLKSF.

This sequence belongs to the eukaryotic ribosomal protein eS21 family.

This is Small ribosomal subunit protein eS21 (rps21) from Dictyostelium discoideum (Social amoeba).